The chain runs to 31 residues: Cyclotide mden-L (31 aa).

Residues 1–31 (GSIPCGESCVYIPCISAVLGCSCKNKVCYRN) constitute a cross-link (cyclopeptide (Gly-Asn)). Cystine bridges form between Cys5–Cys21, Cys9–Cys23, and Cys14–Cys28.

The protein belongs to the cyclotide family. Bracelet subfamily. In terms of processing, this is a cyclic peptide.

Its function is as follows. Probably participates in a plant defense mechanism. This Melicytus dentatus (Tree violet) protein is Cyclotide mden-L.